The sequence spans 757 residues: Cell cycle progression protein 1 (757 aa).

The Cytoplasmic portion of the chain corresponds to 1–217; that stretch reads MSENSSDSDS…KRQFSSGLNK (217 aa). The tract at residues 1–308 is interaction with MCF2L and SRC; it reads MSENSSDSDS…QKTNLATENQ (308 aa). The tract at residues 152–207 is disordered; sequence VFSSQPSDDESSSDETSNQPSPAFRRRRARKKTVSASESEDRLVAEQETEPSKELS. Residues 175-184 are compositionally biased toward basic residues; sequence FRRRRARKKT. Residue Ser-186 is modified to Phosphoserine. Positions 190–207 are enriched in basic and acidic residues; it reads SEDRLVAEQETEPSKELS. A helical; Signal-anchor for type II membrane protein membrane pass occupies residues 218 to 238; the sequence is CVILALVIAISMGFGHFYGTI. At 239 to 757 the chain is on the lumenal side; it reads QIQKRQQLVR…YIKPCHYSSL (519 aa). Coiled-coil stretches lie at residues 248–272 and 306–450; these read RKIHEDELNDMKDYLSQCQQEQESF and ENQY…LWER. The span at 458-468 shows a compositional bias: basic and acidic residues; that stretch reads QNGKQGTDGKK. The disordered stretch occupies residues 458–483; sequence QNGKQGTDGKKKGGRGSHRAKNKSKE. Residues 469 to 479 show a composition bias toward basic residues; sequence KGGRGSHRAKN. A coiled-coil region spans residues 504–530; it reads VRHHKEKIKQAKEAVKENLKKFSDSVK.

This sequence belongs to the CCPG1 family. Interacts with MCF2L. May interact with MCF2, ARHGEF1, BCR, VAV1 and FGD1, but not with TIAM1. Interacts with GTP-bound CDC42 and SRC.

It localises to the cytoplasmic granule membrane. Its function is as follows. Acts as an assembly platform for Rho protein signaling complexes. Limits guanine nucleotide exchange activity of MCF2L toward RHOA, which results in an inhibition of both its transcriptional activation ability and its transforming activity. Does not inhibit activity of MCF2L toward CDC42, or activity of MCF2 toward either RHOA or CDC42. May be involved in cell cycle regulation. This chain is Cell cycle progression protein 1 (CCPG1), found in Homo sapiens (Human).